The following is a 193-amino-acid chain: MSVIPMVVEQTSRGERSYDIYSRLLKERVIFLSGEVEDRMANLIVAQLLFLESEDPTKDINIYINSPGGSVTAGMAIYDTMQFIKPDIRTLCIGQACSMGAFLLAGGTAGKRAALPNARVMIHQPLGGFRGQASDIQIHAQEILKIKHTLNDRLAFHTGQSIERIEKDTDRDNFMSAEEAQAYGLVDEVLVKR.

Catalysis depends on Ser98, which acts as the Nucleophile. The active site involves His123.

It belongs to the peptidase S14 family. As to quaternary structure, fourteen ClpP subunits assemble into 2 heptameric rings which stack back to back to give a disk-like structure with a central cavity, resembling the structure of eukaryotic proteasomes.

The protein resides in the cytoplasm. It catalyses the reaction Hydrolysis of proteins to small peptides in the presence of ATP and magnesium. alpha-casein is the usual test substrate. In the absence of ATP, only oligopeptides shorter than five residues are hydrolyzed (such as succinyl-Leu-Tyr-|-NHMec, and Leu-Tyr-Leu-|-Tyr-Trp, in which cleavage of the -Tyr-|-Leu- and -Tyr-|-Trp bonds also occurs).. Cleaves peptides in various proteins in a process that requires ATP hydrolysis. Has a chymotrypsin-like activity. Plays a major role in the degradation of misfolded proteins. This is ATP-dependent Clp protease proteolytic subunit from Haemophilus influenzae (strain PittEE).